The chain runs to 1151 residues: MSTDVVFDPKRVDKKHNNGLNLPDSLIKRWWSSDVTAVNNSYKNNNVNYNREYPLPDIFRSDPRKYKDVFPLQSHWIMQRYVTKVNEGIYKFLNYFDMKSSTFAPGFNKKEKTNYIHRIAKDLAAKANKEEIRNYSRDLINTLINMDGYDKLSPYLNFLIAILSDFINKTPLTIPTDKEWSRPGFNRIMNPGLVKMQNTYDCIKVFAWAHNYEEPKILFDYLGNRVACLTIIAKDPSASTAAENVFISSEIYSVDRYIWAAAPFNTKSSADWLTNTMYGDLTEEITYRFSPCFGGHCISAEEILTRKKVIDLYVNGEYKTIITGEGHPFGTVFDSMGMLRDPTFNGPLKDLPFTFKSIVDGFLHYGLKQKVTGIMVNMPKDDKWDIDRIRDVLLWMFEITTYRDKTITNFFVDQYVDRDDICCVPFQVAIGSNFSEDRKDNNSLVRQPYFMDPKFIKKYETGREDGTTRYNLKFKIEEDDEEDNILSINQEKITVDFSFFYNKLMDGGFMNKMDLCEIIFRTYAKKSPHVYGYFLLRGKAIKTRSDMINLFNGELRFENNSDDIIIGKKIYENGVDQLAEIFKEYNLNTSENMAGRFKQDPERRYITVNKFVKGDRSDSGGGPPPPPPPDEEEYEDIADEEITITPDVTEPVIANERAAITVVQSDIPEIPIEELITEEEEEEEPTPPPPVQTVATVDQPMVEIVPGQNLVPVGESPMSAPDIDLPIPGLPGPQPQIMEVTSGGPIIEEIESPPILPIQPPLPLPAPPTPQEPPKSILQPPKLIVEPKEVVVPTPPVIEQPKTPEEVPKQIVPPSPAVVSPPSPTTIPQEPPTQPSPIPSQPPVNIIPTQVPPRPGIGERPYPFFEPITPDTPAITPPKLVIKKPADEVIVEEPEEEEKPFVIIDEDEKMGEVEVGQGFPEPFSDRLTVDDLPLEDPRFKSEDVDDIMVAIDSQLEELGEGVGGDGDGGAFIIDPTLPPEVFIDIVDKTINVIEKRVATKRKISDDEEAESESARTRTWVRTTPKDFSGLTAATRGPRINITPKKKRKIVVTTEEEEKLLKEPVTESVEDLPSYEEVKLLDESDNEDDELDITSTPEDMETLKQSRAAPIRARRRGVVMDEESPIKPGSQPVDTSDATKISTDTDELTQQE.

5 disordered regions span residues 611–633 (FVKG…DEEE), 709–740 (NLVP…IMEV), 753–778 (PPIL…KSIL), 795–880 (PPVI…PPKL), and 1060–1151 (LKEP…TQQE). Pro residues-rich tracts occupy residues 754 to 773 (PILP…PQEP) and 811 to 842 (IVPP…PSQP). A compositionally biased stretch (low complexity) spans 867 to 878 (PITPDTPAITPP). A compositionally biased stretch (acidic residues) spans 1082–1091 (ESDNEDDELD). Polar residues predominate over residues 1131–1142 (PVDTSDATKIST).

This is an uncharacterized protein from Ostreid herpesvirus 1 (isolate France) (OsHV-1).